A 115-amino-acid chain; its full sequence is Virion-associated protein (115 aa).

2 coiled-coil regions span residues 1-28 (MAAT…MLER) and 33-54 (KPTG…KIDQ). Residues 96-106 (GNEELGSSGNP) are compositionally biased toward polar residues. The tract at residues 96-115 (GNEELGSSGNPNAVKWPPRK) is disordered.

This sequence belongs to the caulimovirus ORF III family. In terms of assembly, homotetramer, through coiled-coil domain. Homotrimer when interacts with icosehadral capsid. Interacts with capsid protein, and with Movement protein.

The protein resides in the virion. It localises to the host cell junction. The protein localises to the host plasmodesma. Plays a role in virus cell-to-cell and plant-to-plant transmission. Interacts with virion icosahedral capsid and movement protein, thereby facilitating virion cell-to-cell transmission through plasmodesmata opened by viral movement protein. Also interacts with aphid transmission factor, attaching the virion to aphid stylet when the animal feeds on an virus infected plant. Aphid saliva may later detach the virion, inducing release of infectious particles when the animal feeds on a new plant. The sequence is that of Virion-associated protein from Scrophularia californica (California bee plant).